The sequence spans 233 residues: tRNA (guanine-N(1)-)-methyltransferase (233 aa).

S-adenosyl-L-methionine-binding positions include G113 and 133 to 138 (IGDYVL).

Belongs to the RNA methyltransferase TrmD family. As to quaternary structure, homodimer.

The protein localises to the cytoplasm. It carries out the reaction guanosine(37) in tRNA + S-adenosyl-L-methionine = N(1)-methylguanosine(37) in tRNA + S-adenosyl-L-homocysteine + H(+). In terms of biological role, specifically methylates guanosine-37 in various tRNAs. This is tRNA (guanine-N(1)-)-methyltransferase from Ruminiclostridium cellulolyticum (strain ATCC 35319 / DSM 5812 / JCM 6584 / H10) (Clostridium cellulolyticum).